A 357-amino-acid polypeptide reads, in one-letter code: tRNA-specific 2-thiouridylase MnmA (357 aa).

ATP-binding positions include 3 to 10 (AMSGGVDS) and Leu-29. The active-site Nucleophile is the Cys-98. Cys-98 and Cys-196 are disulfide-bonded. Position 122 (Gly-122) interacts with ATP. Residues 146-148 (KDQ) are interaction with tRNA. Cys-196 acts as the Cysteine persulfide intermediate in catalysis. Residues 302-303 (RY) are interaction with tRNA.

Belongs to the MnmA/TRMU family.

The protein resides in the cytoplasm. It catalyses the reaction S-sulfanyl-L-cysteinyl-[protein] + uridine(34) in tRNA + AH2 + ATP = 2-thiouridine(34) in tRNA + L-cysteinyl-[protein] + A + AMP + diphosphate + H(+). Its function is as follows. Catalyzes the 2-thiolation of uridine at the wobble position (U34) of tRNA, leading to the formation of s(2)U34. This Moorella thermoacetica (strain ATCC 39073 / JCM 9320) protein is tRNA-specific 2-thiouridylase MnmA.